A 208-amino-acid chain; its full sequence is Uracil phosphoribosyltransferase (208 aa).

5-phospho-alpha-D-ribose 1-diphosphate-binding positions include R78, R103, and 130 to 138; that span reads DPMLATGGS. Uracil contacts are provided by residues I193 and 198–200; that span reads GDA. D199 is a 5-phospho-alpha-D-ribose 1-diphosphate binding site.

Belongs to the UPRTase family. It depends on Mg(2+) as a cofactor.

It carries out the reaction UMP + diphosphate = 5-phospho-alpha-D-ribose 1-diphosphate + uracil. It participates in pyrimidine metabolism; UMP biosynthesis via salvage pathway; UMP from uracil: step 1/1. Allosterically activated by GTP. Its function is as follows. Catalyzes the conversion of uracil and 5-phospho-alpha-D-ribose 1-diphosphate (PRPP) to UMP and diphosphate. This Actinobacillus succinogenes (strain ATCC 55618 / DSM 22257 / CCUG 43843 / 130Z) protein is Uracil phosphoribosyltransferase.